Here is a 51-residue protein sequence, read N- to C-terminus: Conotoxin Cal6.33 (51 aa).

The signal sequence occupies residues 1–22; it reads MKLTCVVIIAVLILTACQFTTA. 3 cysteine pairs are disulfide-bonded: C25-C39, C32-C43, and C38-C50.

It belongs to the conotoxin O1 superfamily. In terms of tissue distribution, expressed by the venom duct.

The protein localises to the secreted. Probable neurotoxin. The sequence is that of Conotoxin Cal6.33 from Californiconus californicus (California cone).